The chain runs to 2287 residues: Protein Ycf2 (2287 aa).

1641-1648 (GSIGTGRS) is a binding site for ATP.

It belongs to the Ycf2 family.

The protein localises to the plastid. It is found in the chloroplast stroma. Probable ATPase of unknown function. Its presence in a non-photosynthetic plant (Epifagus virginiana) and experiments in tobacco indicate that it has an essential function which is probably not related to photosynthesis. This Lepidium virginicum (Virginia pepperweed) protein is Protein Ycf2.